The following is a 429-amino-acid chain: Phosphoribosylamine--glycine ligase (429 aa).

Positions Lys-109 to Asp-316 constitute an ATP-grasp domain. Residue Val-135 to Ser-196 participates in ATP binding. A disordered region spans residues Ser-212 to Pro-235. Residues Gln-213–Thr-223 show a composition bias toward basic and acidic residues. Mg(2+) contacts are provided by Glu-286 and Asn-288.

The protein belongs to the GARS family. Mg(2+) serves as cofactor. Requires Mn(2+) as cofactor.

The enzyme catalyses 5-phospho-beta-D-ribosylamine + glycine + ATP = N(1)-(5-phospho-beta-D-ribosyl)glycinamide + ADP + phosphate + H(+). The protein operates within purine metabolism; IMP biosynthesis via de novo pathway; N(1)-(5-phospho-D-ribosyl)glycinamide from 5-phospho-alpha-D-ribose 1-diphosphate: step 2/2. The chain is Phosphoribosylamine--glycine ligase from Vibrio parahaemolyticus serotype O3:K6 (strain RIMD 2210633).